The sequence spans 129 residues: Thioredoxin H7 (129 aa).

The 124-residue stretch at 6–129 folds into the Thioredoxin domain; sequence SSVHDVHSSM…LVKKIEQHRV (124 aa). Active-site nucleophile residues include cysteine 55 and cysteine 58. Cysteine 55 and cysteine 58 are oxidised to a cystine.

It belongs to the thioredoxin family. Plant H-type subfamily.

The protein resides in the cytoplasm. Probable thiol-disulfide oxidoreductase that may be involved in the redox regulation of a number of cytosolic enzymes. In Arabidopsis thaliana (Mouse-ear cress), this protein is Thioredoxin H7 (TRX7).